A 1022-amino-acid chain; its full sequence is D-2-hydroxyglutarate dehydrogenase (1022 aa).

The region spanning 53–286 is the FAD-binding PCMH-type domain; the sequence is YQLLPDAVLF…SEARLDITPL (234 aa). Arginine 407 and histidine 505 together coordinate (R)-2-hydroxyglutarate. In terms of domain architecture, 4Fe-4S ferredoxin-type spans 667-700; sequence FSHEVKEAMSGCLACKACSTQCPIKIDVPAFRSR. [4Fe-4S] cluster-binding residues include cysteine 678, cysteine 681, cysteine 684, and cysteine 688.

The protein in the N-terminal section; belongs to the FAD-binding oxidoreductase/transferase type 4 family. In terms of assembly, homotetramer. The cofactor is [4Fe-4S] cluster. Requires FAD as cofactor.

The catalysed reaction is (R)-2-hydroxyglutarate + A = 2-oxoglutarate + AH2. Its activity is regulated as follows. Activity is completely inhibited by the addition of 0.5 mM Mn(2+), Ni(2+), or Co(2+) and partially inhibited by 0.5 mM Zn(2+). Catalyzes the oxidation of D-2-hydroxyglutarate (D-2-HGA) to 2-oxoglutarate. Appears to be the only D2HGDH in P.ananatis, providing the way to recycle D-2-HGA produced during L-serine synthesis by SerA, by converting it back to 2-oxoglutarate. Is involved in the utilization of D-2-HGA, that can support the growth of P.ananatis as a sole carbon source, although it barely serves as a good substrate. The physiological molecule that functions as the primary electron acceptor during D-2-HGA oxidation by YdiJ in P.ananatis is unknown. Shows strict substrate specificity towards D-2-HGA, since it has no detectable activity on L-2-hydroxyglutarate, L-malate, D-malate, L-lactate, D-lactate, L-tartrate, D-tartrate, L-glycerate, D-glycerate, glutarate, or pyruvate. The protein is D-2-hydroxyglutarate dehydrogenase of Pantoea ananatis (strain AJ13355).